Reading from the N-terminus, the 253-residue chain is Pro-opiomelanocortin A (253 aa).

An N-terminal signal peptide occupies residues 1 to 21 (MLCPAWLLAVAVVGVVRGVKG). A Pyrrolidone carboxylic acid modification is found at Gln-22. 2 cysteine pairs are disulfide-bonded: Cys-23–Cys-45 and Cys-29–Cys-41. The residue at position 104 (Ser-104) is an N-acetylserine; in Corticotropin. Val-116 carries the valine amide modification. Positions 228-253 (QKREQWGREEGEEKRALGERKYHFQG) are disordered. Position 252 is a glutamine amide; partial (Gln-252).

The protein belongs to the POMC family. Specific enzymatic cleavages at paired basic residues yield the different active peptides. In terms of processing, acetylation of beta-endorphin occurs in a tissue-specific manner. As to expression, C-terminal peptide 1 and C-terminal peptide 2 are detected in the anterior part of the nucleus lateralis tuberis of hypothalamus, in dorsal hypothalamus, thalamus, telencephalon, optic tectum and medulla oblongata (at protein level). Expressed in pituitary and hypothalamus of adult diploid animals, and hypothalamus of triploid and ovulated female trout.

Its subcellular location is the secreted. Its function is as follows. Stimulates the adrenal glands to release cortisol. Melanocyte-stimulating hormone alpha: Anorexigenic peptide. Increases the pigmentation of skin by increasing melanin production in melanocytes. Functionally, melanocyte-stimulating hormone beta: Increases the pigmentation of skin by increasing melanin production in melanocytes. In terms of biological role, beta-endorphin: Endogenous orexigenic opiate. Its function is as follows. Endogenous opiate. This chain is Pro-opiomelanocortin A (pomca), found in Oncorhynchus mykiss (Rainbow trout).